Consider the following 270-residue polypeptide: Putative pyruvate, phosphate dikinase regulatory protein (270 aa).

Residue 147–154 participates in ADP binding; that stretch reads GVSRSSKT.

Belongs to the pyruvate, phosphate/water dikinase regulatory protein family. PDRP subfamily.

It catalyses the reaction N(tele)-phospho-L-histidyl/L-threonyl-[pyruvate, phosphate dikinase] + ADP = N(tele)-phospho-L-histidyl/O-phospho-L-threonyl-[pyruvate, phosphate dikinase] + AMP + H(+). The enzyme catalyses N(tele)-phospho-L-histidyl/O-phospho-L-threonyl-[pyruvate, phosphate dikinase] + phosphate + H(+) = N(tele)-phospho-L-histidyl/L-threonyl-[pyruvate, phosphate dikinase] + diphosphate. Functionally, bifunctional serine/threonine kinase and phosphorylase involved in the regulation of the pyruvate, phosphate dikinase (PPDK) by catalyzing its phosphorylation/dephosphorylation. The chain is Putative pyruvate, phosphate dikinase regulatory protein from Citrifermentans bemidjiense (strain ATCC BAA-1014 / DSM 16622 / JCM 12645 / Bem) (Geobacter bemidjiensis).